We begin with the raw amino-acid sequence, 604 residues long: Elongation factor 4 (604 aa).

In terms of domain architecture, tr-type G spans 10–191; sequence KNIRNFSIIA…KIITTIPAPS (182 aa). GTP-binding positions include 22-27 and 138-141; these read DHGKST and NKID.

It belongs to the TRAFAC class translation factor GTPase superfamily. Classic translation factor GTPase family. LepA subfamily.

It is found in the cell inner membrane. It catalyses the reaction GTP + H2O = GDP + phosphate + H(+). Its function is as follows. Required for accurate and efficient protein synthesis under certain stress conditions. May act as a fidelity factor of the translation reaction, by catalyzing a one-codon backward translocation of tRNAs on improperly translocated ribosomes. Back-translocation proceeds from a post-translocation (POST) complex to a pre-translocation (PRE) complex, thus giving elongation factor G a second chance to translocate the tRNAs correctly. Binds to ribosomes in a GTP-dependent manner. This Helicobacter pylori (strain P12) protein is Elongation factor 4.